The primary structure comprises 69 residues: Large ribosomal subunit protein uL29 (69 aa).

This sequence belongs to the universal ribosomal protein uL29 family.

This Rhodopseudomonas palustris (strain TIE-1) protein is Large ribosomal subunit protein uL29.